Here is a 29-residue protein sequence, read N- to C-terminus: NAD(P)H-quinone oxidoreductase subunit 5, chloroplastic (29 aa).

A helical transmembrane segment spans residues 1–15 (SGSIIHSMEANVGYS).

It belongs to the complex I subunit 5 family. In terms of assembly, NDH is composed of at least 16 different subunits, 5 of which are encoded in the nucleus.

It is found in the plastid. Its subcellular location is the chloroplast thylakoid membrane. The catalysed reaction is a plastoquinone + NADH + (n+1) H(+)(in) = a plastoquinol + NAD(+) + n H(+)(out). The enzyme catalyses a plastoquinone + NADPH + (n+1) H(+)(in) = a plastoquinol + NADP(+) + n H(+)(out). Functionally, NDH shuttles electrons from NAD(P)H:plastoquinone, via FMN and iron-sulfur (Fe-S) centers, to quinones in the photosynthetic chain and possibly in a chloroplast respiratory chain. The immediate electron acceptor for the enzyme in this species is believed to be plastoquinone. Couples the redox reaction to proton translocation, and thus conserves the redox energy in a proton gradient. This chain is NAD(P)H-quinone oxidoreductase subunit 5, chloroplastic, found in Pseudotsuga menziesii (Douglas-fir).